Reading from the N-terminus, the 402-residue chain is MKRQNVRTLSLIACTFTYLLVGAAVFDALESDHEMREEEKLKAEEVRLRGKYNISSDDYQQLELVILQSEPHRAGVQWKFAGSFYFAITVITTIGYGHAAPGTDAGKAFCMFYAVLGIPLTLVMFQSLGERMNTFVRYLLKRIKKCCGMRNTEVSMENMVTVGFFSCMGTLCLGAAAFSQCEDWSFFHAYYYCFITLTTIGFGDFVALQAKGALQRKPFYVAFSFMYILVGLTVIGAFLNLVVLRFLTMNTDEELLEGEVAEILAGNPRRVSVRAPQRRKRHHAMYFLRKYGRTLCYLCFPGTNWGKDDDDDDDDDVVDNVVVTAPISAPAPAPAPAPAPAAVAAGATIRSVRATVHTVSCRVEEIPPDVLRNTYFRSVFGAIPPGMHTCGDHRLHLRRKSI.

Topologically, residues 1–8 (MKRQNVRT) are cytoplasmic. The chain crosses the membrane as a helical span at residues 9–29 (LSLIACTFTYLLVGAAVFDAL). The Extracellular segment spans residues 30–88 (ESDHEMREEEKLKAEEVRLRGKYNISSDDYQQLELVILQSEPHRAGVQWKFAGSFYFAI). Asn53 carries N-linked (GlcNAc...) asparagine glycosylation. Residues 89–101 (TVITTIGYGHAAP) constitute an intramembrane region (pore-forming). Positions 93, 94, 95, and 96 each coordinate K(+). The segment at 93 to 98 (TIGYGH) is selectivity filter 1. The Extracellular segment spans residues 102–107 (GTDAGK). The chain crosses the membrane as a helical span at residues 108 to 128 (AFCMFYAVLGIPLTLVMFQSL). Topologically, residues 129–158 (GERMNTFVRYLLKRIKKCCGMRNTEVSMEN) are cytoplasmic. The helical transmembrane segment at 159-179 (MVTVGFFSCMGTLCLGAAAFS) threads the bilayer. The Extracellular portion of the chain corresponds to 180 to 194 (QCEDWSFFHAYYYCF). An intramembrane region (pore-forming) is located at residues 195–207 (ITLTTIGFGDFVA). Residues Thr199, Ile200, Gly201, and Phe202 each coordinate K(+). The tract at residues 199 to 204 (TIGFGD) is selectivity filter 2. The Extracellular segment spans residues 208 to 218 (LQAKGALQRKP). A helical membrane pass occupies residues 219–239 (FYVAFSFMYILVGLTVIGAFL). Over 240–402 (NLVVLRFLTM…HRLHLRRKSI (163 aa)) the chain is Cytoplasmic. Residues 243–248 (VLRFLT) are X-gate.

It belongs to the two pore domain potassium channel (TC 1.A.1.8) family. In terms of assembly, homodimer. Heterodimer with KCNK1. Heterodimer with KCNK3. Expressed in adrenal glands mainly in outer zona glomerulosa and inner zona medullaris. Expressed in retinal ganglion cells. Expressed in dentate gyrus (at protein level).

It is found in the cell membrane. Its subcellular location is the mitochondrion inner membrane. It localises to the cell projection. The protein localises to the dendrite. The enzyme catalyses K(+)(in) = K(+)(out). It carries out the reaction Na(+)(in) = Na(+)(out). Inhibited by NTS:NTSR1 signaling in dentate gyrus granule cells. Functionally, k(+) channel that conducts voltage-dependent outward rectifying currents upon membrane depolarization. Voltage sensing is coupled to K(+) electrochemical gradient in an 'ion flux gating' mode where outward but not inward ion flow opens the gate. Changes ion selectivity and becomes permeable to Na(+) ions in response to extracellular acidification. Protonation of the pH sensor His-98 stabilizes C-type inactivation conformation likely converting the channel from outward K(+)-conducting, to inward Na(+)-conducting to nonconductive state. Homo- and heterodimerizes to form functional channels with distinct regulatory and gating properties. Allows K(+) currents with fast-gating kinetics important for the repolarization and hyperpolarization phases of action potentials. In granule neurons, hyperpolarizes the resting membrane potential to limit intrinsic neuronal excitability, but once the action potential threshold is reached, supports high-frequency action potential firing and increased neuronal excitability. Homomeric and/or heteromeric KCNK3:KCNK9 channels operate in cerebellar granule cells, whereas heteromeric KCNK1:KCNK9 enables currents in hippocampal dentate gyrus granule neurons. Dispensable for central chemosensory respiration i.e. breathing controlled by brainstem CO2/pH, it rather conducts pH-sensitive currents and controls the firing rate of serotonergic raphe neurons involved in potentiation of the respiratory chemoreflex. In retinal ganglion cells, mediates outward rectifying currents that regulate action potentials in response to acidification of the synaptic cleft. Involved in transmission of image-forming and nonimage-forming visual information in the retina. In adrenal gland, contributes to the maintenance of a hyperpolarized resting membrane potential of aldosterone-producing cells at zona glomerulosa and limits aldosterone release as part of a regulatory mechanism that controls arterial blood pressure and electrolyte homeostasis. The sequence is that of Potassium channel subfamily K member 9 from Mus musculus (Mouse).